The chain runs to 81 residues: Serine/arginine-rich splicing factor 6 (81 aa).

A compositionally biased stretch (basic residues) spans 1-48; that stretch reads RSRSRSRRSSRSRSRSISKSRSRSRSRSKGRSRSRSKGRKSRSKSKSK. Positions 1 to 81 are disordered; the sequence is RSRSRSRRSS…SRSRSRSRSP (81 aa). Over residues 62–71 the composition is skewed to basic and acidic residues; that stretch reads RSKDEYEKSR. A compositionally biased stretch (basic residues) spans 72 to 81; it reads SRSRSRSRSP.

Belongs to the splicing factor SR family. Binds SREK1/SFRS12. Interacts with DYRK1A. Post-translationally, extensively phosphorylated on serine residues in the RS domain. Phosphorylated by DYRK1A, probably in the RS domain. Phosphorylation by DYRK1A modulates alternative splice site selection and inhibits the expression of MAPT/Tau exon 10.

The protein localises to the nucleus. Its subcellular location is the nucleus speckle. Functionally, plays a role in constitutive splicing and modulates the selection of alternative splice sites. Plays a role in the alternative splicing of MAPT/Tau exon 10. Binds to alternative exons of TNC pre-mRNA and promotes the expression of alternatively spliced TNC. Plays a role in wound healing and in the regulation of keratinocyte differentiation and proliferation via its role in alternative splicing. This chain is Serine/arginine-rich splicing factor 6 (SRSF6), found in Oryctolagus cuniculus (Rabbit).